A 236-amino-acid polypeptide reads, in one-letter code: Ribosome maturation protein SDO1 homolog (236 aa).

This sequence belongs to the SDO1/SBDS family.

The protein is Ribosome maturation protein SDO1 homolog of Pyrococcus abyssi (strain GE5 / Orsay).